The sequence spans 192 residues: Ribosomal RNA small subunit methyltransferase G (192 aa).

Residues Gly59, Ile111 to Glu112, and Arg124 each bind S-adenosyl-L-methionine.

It belongs to the methyltransferase superfamily. RNA methyltransferase RsmG family.

The protein localises to the cytoplasm. In terms of biological role, specifically methylates the N7 position of a guanine in 16S rRNA. The sequence is that of Ribosomal RNA small subunit methyltransferase G from Mycoplasma genitalium (strain ATCC 33530 / DSM 19775 / NCTC 10195 / G37) (Mycoplasmoides genitalium).